Here is a 654-residue protein sequence, read N- to C-terminus: Smc-like protein Sph3 (654 aa).

2 coiled-coil regions span residues T135–V290 and I341–A503.

The protein belongs to the Sph1/Sph2 family.

Functionally, involved in cell-shape determination. Required for the formation of rods and wild-type-like motility. This is Smc-like protein Sph3 from Haloferax volcanii (strain ATCC 29605 / DSM 3757 / JCM 8879 / NBRC 14742 / NCIMB 2012 / VKM B-1768 / DS2) (Halobacterium volcanii).